A 242-amino-acid polypeptide reads, in one-letter code: Ubiquinone biosynthesis O-methyltransferase (242 aa).

S-adenosyl-L-methionine contacts are provided by arginine 44, glycine 64, aspartate 85, and methionine 129.

This sequence belongs to the methyltransferase superfamily. UbiG/COQ3 family.

It carries out the reaction a 3-demethylubiquinol + S-adenosyl-L-methionine = a ubiquinol + S-adenosyl-L-homocysteine + H(+). It catalyses the reaction a 3-(all-trans-polyprenyl)benzene-1,2-diol + S-adenosyl-L-methionine = a 2-methoxy-6-(all-trans-polyprenyl)phenol + S-adenosyl-L-homocysteine + H(+). It functions in the pathway cofactor biosynthesis; ubiquinone biosynthesis. Functionally, O-methyltransferase that catalyzes the 2 O-methylation steps in the ubiquinone biosynthetic pathway. The chain is Ubiquinone biosynthesis O-methyltransferase from Klebsiella pneumoniae subsp. pneumoniae (strain ATCC 700721 / MGH 78578).